We begin with the raw amino-acid sequence, 250 residues long: DNA repair protein RecO (250 aa).

It belongs to the RecO family.

Functionally, involved in DNA repair and RecF pathway recombination. In Rhodospirillum centenum (strain ATCC 51521 / SW), this protein is DNA repair protein RecO.